The sequence spans 407 residues: MSSIVNGFSIQKSTKTAYDTQQPCDCWDCSAFTAVVGCGQTDGMDDWEFGETACCFTCPNKKQCAKPDPAECNIGTDSHQRDPLTRVTWNGRGPNVQCVYDVNRINTLEQIDNFKQRFGVHGDYNAVVANYCQQSSDSCITDPETGTKMTKCSRFKSDQKDGELCRGWFNQQPKAVQDTVVQNYCAVNNTPDCKCVNRAQNEVYRELKIGKVINDGCWFTPCANPQSYLLTTEVENPTCPSNFCDIIYNIIKDRDVTIDDVKNDINCVFKPDPPPQPKPQPPPDPPKPPPDPPKPDPPPPPPPKPTPPPDPPKPKPDPVPPPKPTPPPPKPTPPPPIPPQPVPILPIPPVDLKKNWIMLTFVGLVLALVIYPKSRHAIGTHTWRNAAIAVLVGLNAFGLQSYVNNHV.

Residues 265–337 (INCVFKPDPP…PPKPTPPPPI (73 aa)) form a disordered region. A compositionally biased stretch (pro residues) spans 271-337 (PDPPPQPKPQ…PPKPTPPPPI (67 aa)). A run of 2 helical transmembrane segments spans residues 355–372 (NWIMLTFVGLVLALVIYP) and 385–403 (NAAIAVLVGLNAFGLQSYV).

This sequence belongs to the IIV-6 337L family.

Its subcellular location is the virion membrane. The protein is Putative membrane protein 047R of Aedes vexans (Inland floodwater mosquito).